Here is a 505-residue protein sequence, read N- to C-terminus: Maturase K (505 aa).

The protein belongs to the intron maturase 2 family. MatK subfamily.

The protein resides in the plastid. It localises to the chloroplast. Its function is as follows. Usually encoded in the trnK tRNA gene intron. Probably assists in splicing its own and other chloroplast group II introns. This Elaeagnus umbellata (Autumn olive) protein is Maturase K.